We begin with the raw amino-acid sequence, 504 residues long: Multidrug efflux pump LfrA (504 aa).

The next 14 membrane-spanning stretches (helical) occupy residues tryptophan 19 to leucine 39, leucine 58 to leucine 78, leucine 87 to serine 107, leucine 110 to leucine 130, leucine 145 to glycine 165, phenylalanine 172 to glycine 192, proline 206 to valine 226, glycine 233 to valine 253, threonine 275 to isoleucine 295, threonine 309 to valine 329, aspartate 338 to phenylalanine 358, asparagine 361 to serine 381, alanine 408 to tyrosine 428, and isoleucine 480 to valine 500.

The protein belongs to the major facilitator superfamily.

It localises to the cell inner membrane. Inhibited by the protonophore carbonyl cyanide m-chorophenylhydrazone (CCCP). Ethidium bromide efflux is inhibited by chlorpromazine, thioridazine and verapamil. Functionally, energy-dependent efflux pump that contributes to drug resistance. Catalyzes the efflux of norfloxacin and several related fluoroquinolones (FQ). Contributes significantly to the intrinsic MICs for ethidium bromide and acriflavine. Overexpression confers low-level resistance to hydrophilic FQ such as ciprofloxacin, ofloxacin and levofloxacin, and to ethidium bromide, acridine, acriflavine, rhodamine 123 and some quaternary ammonium compounds. May contribute to resistance to certain beta-lactams. Probably uses the proton motive force to export drugs. This Mycolicibacterium smegmatis (strain ATCC 700084 / mc(2)155) (Mycobacterium smegmatis) protein is Multidrug efflux pump LfrA.